The sequence spans 209 residues: Large ribosomal subunit protein uL3 (209 aa).

Residues 132–153 (ATHGNSLSHRVPGSIGQNQTPG) form a disordered region. Glutamine 150 carries the post-translational modification N5-methylglutamine.

The protein belongs to the universal ribosomal protein uL3 family. In terms of assembly, part of the 50S ribosomal subunit. Forms a cluster with proteins L14 and L19. Post-translationally, methylated by PrmB.

In terms of biological role, one of the primary rRNA binding proteins, it binds directly near the 3'-end of the 23S rRNA, where it nucleates assembly of the 50S subunit. In Enterobacter sp. (strain 638), this protein is Large ribosomal subunit protein uL3.